Reading from the N-terminus, the 496-residue chain is Glutamyl-tRNA(Gln) amidotransferase subunit A (496 aa).

Active-site charge relay system residues include lysine 75 and serine 150. Serine 174 (acyl-ester intermediate) is an active-site residue.

The protein belongs to the amidase family. GatA subfamily. Heterotrimer of A, B and C subunits.

It carries out the reaction L-glutamyl-tRNA(Gln) + L-glutamine + ATP + H2O = L-glutaminyl-tRNA(Gln) + L-glutamate + ADP + phosphate + H(+). In terms of biological role, allows the formation of correctly charged Gln-tRNA(Gln) through the transamidation of misacylated Glu-tRNA(Gln) in organisms which lack glutaminyl-tRNA synthetase. The reaction takes place in the presence of glutamine and ATP through an activated gamma-phospho-Glu-tRNA(Gln). In Burkholderia pseudomallei (strain 1106a), this protein is Glutamyl-tRNA(Gln) amidotransferase subunit A.